The following is a 50-amino-acid chain: Large ribosomal subunit protein bL32A (50 aa).

Over residues 1-19 the composition is skewed to basic residues; it reads MAVPKRRKSRSNTRHRRSQ. A disordered region spans residues 1-21; that stretch reads MAVPKRRKSRSNTRHRRSQWK.

It belongs to the bacterial ribosomal protein bL32 family.

The polypeptide is Large ribosomal subunit protein bL32A (Saccharopolyspora erythraea (strain ATCC 11635 / DSM 40517 / JCM 4748 / NBRC 13426 / NCIMB 8594 / NRRL 2338)).